Reading from the N-terminus, the 44-residue chain is DNA-directed RNA polymerase subunit Rpo12 (44 aa).

Cys8, Cys22, and Cys25 together coordinate Zn(2+).

Belongs to the archaeal Rpo12/eukaryotic RPC10 RNA polymerase subunit family. In terms of assembly, part of the RNA polymerase complex. It depends on Zn(2+) as a cofactor.

The protein resides in the cytoplasm. It catalyses the reaction RNA(n) + a ribonucleoside 5'-triphosphate = RNA(n+1) + diphosphate. Functionally, DNA-dependent RNA polymerase (RNAP) catalyzes the transcription of DNA into RNA using the four ribonucleoside triphosphates as substrates. In Haloquadratum walsbyi (strain DSM 16790 / HBSQ001), this protein is DNA-directed RNA polymerase subunit Rpo12.